The chain runs to 201 residues: Holliday junction branch migration complex subunit RuvA (201 aa).

The segment at 1-64 (MFNSISGILS…EDQMRLFGFP (64 aa)) is domain I. Residues 65 to 140 (NQAERSLFLD…KLTNLNEVSS (76 aa)) are domain II. The interval 140–144 (SKGQA) is flexible linker. The domain III stretch occupies residues 145–201 (SVSCEYEDIVTALTEMGFERKSVIVQVEKIAEEMKAAGSDPLKNEEELFRRSIVALS).

The protein belongs to the RuvA family. As to quaternary structure, homotetramer. Forms an RuvA(8)-RuvB(12)-Holliday junction (HJ) complex. HJ DNA is sandwiched between 2 RuvA tetramers; dsDNA enters through RuvA and exits via RuvB. An RuvB hexamer assembles on each DNA strand where it exits the tetramer. Each RuvB hexamer is contacted by two RuvA subunits (via domain III) on 2 adjacent RuvB subunits; this complex drives branch migration. In the full resolvosome a probable DNA-RuvA(4)-RuvB(12)-RuvC(2) complex forms which resolves the HJ.

It localises to the cytoplasm. Functionally, the RuvA-RuvB-RuvC complex processes Holliday junction (HJ) DNA during genetic recombination and DNA repair, while the RuvA-RuvB complex plays an important role in the rescue of blocked DNA replication forks via replication fork reversal (RFR). RuvA specifically binds to HJ cruciform DNA, conferring on it an open structure. The RuvB hexamer acts as an ATP-dependent pump, pulling dsDNA into and through the RuvAB complex. HJ branch migration allows RuvC to scan DNA until it finds its consensus sequence, where it cleaves and resolves the cruciform DNA. The sequence is that of Holliday junction branch migration complex subunit RuvA from Treponema denticola (strain ATCC 35405 / DSM 14222 / CIP 103919 / JCM 8153 / KCTC 15104).